Consider the following 348-residue polypeptide: Fe(3+) ions import ATP-binding protein FbpC (348 aa).

Residues 7 to 237 enclose the ABC transporter domain; that stretch reads VELRNVTKRF…PASRFMASFM (231 aa). Residue 39–46 coordinates ATP; that stretch reads GPSGCGKT.

This sequence belongs to the ABC transporter superfamily. Fe(3+) ion importer (TC 3.A.1.10) family. As to quaternary structure, the complex is composed of two ATP-binding proteins (FbpC), two transmembrane proteins (FbpB) and a solute-binding protein (FbpA).

Its subcellular location is the cell inner membrane. It catalyses the reaction Fe(3+)(out) + ATP + H2O = Fe(3+)(in) + ADP + phosphate + H(+). Part of the ABC transporter complex FbpABC involved in Fe(3+) ions import. Responsible for energy coupling to the transport system. This Escherichia coli (strain K12) protein is Fe(3+) ions import ATP-binding protein FbpC.